Reading from the N-terminus, the 194-residue chain is Large ribosomal subunit protein uL24c (194 aa).

The transit peptide at 1 to 50 (MVAMAMASLQSSMSSLSLSSNSFLGQPLSPITLSPFLQGKPTEKKCLIVM) directs the protein to the chloroplast.

It belongs to the universal ribosomal protein uL24 family. Part of the 50S ribosomal subunit.

It is found in the plastid. It localises to the chloroplast. In terms of biological role, one of two assembly initiator proteins, it binds directly to the 5'-end of the 23S rRNA, where it nucleates assembly of the 50S subunit. This chain is Large ribosomal subunit protein uL24c (RPL24), found in Pisum sativum (Garden pea).